The primary structure comprises 306 residues: Curved DNA-binding protein (306 aa).

Residues 5–69 (DYYAIMGVKP…QRRAEYDQMW (65 aa)) enclose the J domain.

It is found in the cytoplasm. It localises to the nucleoid. In terms of biological role, DNA-binding protein that preferentially recognizes a curved DNA sequence. It is probably a functional analog of DnaJ; displays overlapping activities with DnaJ, but functions under different conditions, probably acting as a molecular chaperone in an adaptive response to environmental stresses other than heat shock. Lacks autonomous chaperone activity; binds native substrates and targets them for recognition by DnaK. Its activity is inhibited by the binding of CbpM. This chain is Curved DNA-binding protein, found in Escherichia coli O7:K1 (strain IAI39 / ExPEC).